We begin with the raw amino-acid sequence, 366 residues long: tRNA/tmRNA (uracil-C(5))-methyltransferase (366 aa).

Q190, Y218, N223, E239, and D299 together coordinate S-adenosyl-L-methionine. The active-site Nucleophile is C324. Residue E358 is the Proton acceptor of the active site.

It belongs to the class I-like SAM-binding methyltransferase superfamily. RNA M5U methyltransferase family. TrmA subfamily.

The enzyme catalyses uridine(54) in tRNA + S-adenosyl-L-methionine = 5-methyluridine(54) in tRNA + S-adenosyl-L-homocysteine + H(+). It carries out the reaction uridine(341) in tmRNA + S-adenosyl-L-methionine = 5-methyluridine(341) in tmRNA + S-adenosyl-L-homocysteine + H(+). Its function is as follows. Dual-specificity methyltransferase that catalyzes the formation of 5-methyluridine at position 54 (m5U54) in all tRNAs, and that of position 341 (m5U341) in tmRNA (transfer-mRNA). The polypeptide is tRNA/tmRNA (uracil-C(5))-methyltransferase (Cronobacter sakazakii (strain ATCC BAA-894) (Enterobacter sakazakii)).